A 72-amino-acid chain; its full sequence is Small ribosomal subunit protein eS31 (72 aa).

The Zn(2+) site is built by cysteine 32, cysteine 35, cysteine 51, and cysteine 54. The C4-type zinc finger occupies 32–54 (CPRCGSVMAYHKEPVPRWHCGKC).

The protein belongs to the eukaryotic ribosomal protein eS31 family. As to quaternary structure, part of the 30S ribosomal subunit. Zn(2+) serves as cofactor.

This Caldivirga maquilingensis (strain ATCC 700844 / DSM 13496 / JCM 10307 / IC-167) protein is Small ribosomal subunit protein eS31.